The chain runs to 586 residues: Phosphoenolpyruvate-protein phosphotransferase (586 aa).

Catalysis depends on histidine 201, which acts as the Tele-phosphohistidine intermediate. Arginine 308 and arginine 345 together coordinate phosphoenolpyruvate. Residues glutamate 446 and aspartate 470 each contribute to the Mg(2+) site. Residues 469–470 (ND) and arginine 480 each bind phosphoenolpyruvate. The active-site Proton donor is the cysteine 517.

The protein belongs to the PEP-utilizing enzyme family. In terms of assembly, homodimer. It depends on Mg(2+) as a cofactor.

It is found in the cytoplasm. The enzyme catalyses L-histidyl-[protein] + phosphoenolpyruvate = N(pros)-phospho-L-histidyl-[protein] + pyruvate. Its function is as follows. General (non sugar-specific) component of the phosphoenolpyruvate-dependent sugar phosphotransferase system (sugar PTS). This major carbohydrate active-transport system catalyzes the phosphorylation of incoming sugar substrates concomitantly with their translocation across the cell membrane. Enzyme I transfers the phosphoryl group from phosphoenolpyruvate (PEP) to the phosphoryl carrier protein (HPr). The chain is Phosphoenolpyruvate-protein phosphotransferase from Cupriavidus necator (strain ATCC 17699 / DSM 428 / KCTC 22496 / NCIMB 10442 / H16 / Stanier 337) (Ralstonia eutropha).